A 647-amino-acid polypeptide reads, in one-letter code: Capsid protein (647 aa).

A disordered region spans residues 1 to 48; it reads MGDAGVASQRPHNRRGTRNVRVSANTVTVNGRRNQRRRTGRQVSPPDN.

Belongs to the tetravirus capsid protein family.

It is found in the virion. Its function is as follows. Self-assembles to form an icosahedral capsid with a T=4 symmetry, about 35 nm in diameter, and consisting of 240 copies of the two structural proteins. The protein is Capsid protein (p71) of Helicoverpa armigera (Cotton bollworm).